The chain runs to 378 residues: Alcohol dehydrogenase 1 (378 aa).

Zn(2+) is bound at residue C48. Residue 49–53 participates in NAD(+) binding; the sequence is HTDVL. Positions 69, 99, 102, 105, 113, and 177 each coordinate Zn(2+). NAD(+) is bound by residues 202 to 207, D226, K231, 274 to 276, 297 to 299, and 321 to 323; these read GIGTVG, TGV, IGA, and TAF.

Belongs to the zinc-containing alcohol dehydrogenase family. Class-IV subfamily. In terms of assembly, homodimer. The cofactor is Zn(2+). As to expression, present in non-glandular trichome cells.

Its subcellular location is the nucleus. It localises to the cytoplasm. The protein resides in the cytosol. It catalyses the reaction (+)-artemisinic alcohol + NAD(+) = (+)-artemisinic aldehyde + NADH + H(+). The protein operates within sesquiterpene biosynthesis. Functionally, involved in the biosynthesis of the antimalarial endoperoxide artemisinin. Catalyzes the conversion of artemisinic alcohol into artemisinic aldehyde. This chain is Alcohol dehydrogenase 1, found in Artemisia annua (Sweet wormwood).